The following is a 215-amino-acid chain: MPATMVLTAPSLLSSSALIVLAYLIGSIPFAVVVSKLMGLQDPRSYGSGNPGATNVLRTGNKTAAALTLLGDAAKGWFALWLARALVPELSWGAYALVALAVFLGHLYPLFLRFKGGKGVATALGVLMAIEPWLAVATIATWLIVAVFSRYSSLAALVAAFFAPVYYVFGSGAAWHARLEVGLAIAVISALLFYRHRANIARLLKGTESRIGKKK.

A run of 5 helical transmembrane segments spans residues 14–34 (SSSA…AVVV), 63–83 (TAAA…LWLA), 92–112 (WGAY…PLFL), 128–148 (MAIE…VAVF), and 154–174 (LAAL…SGAA).

The protein belongs to the PlsY family. As to quaternary structure, probably interacts with PlsX.

The protein resides in the cell inner membrane. It carries out the reaction an acyl phosphate + sn-glycerol 3-phosphate = a 1-acyl-sn-glycero-3-phosphate + phosphate. The protein operates within lipid metabolism; phospholipid metabolism. Catalyzes the transfer of an acyl group from acyl-phosphate (acyl-PO(4)) to glycerol-3-phosphate (G3P) to form lysophosphatidic acid (LPA). This enzyme utilizes acyl-phosphate as fatty acyl donor, but not acyl-CoA or acyl-ACP. The polypeptide is Glycerol-3-phosphate acyltransferase (Bordetella bronchiseptica (strain ATCC BAA-588 / NCTC 13252 / RB50) (Alcaligenes bronchisepticus)).